Consider the following 175-residue polypeptide: Phosphopantetheine adenylyltransferase (175 aa).

Serine 10 is a substrate binding site. ATP-binding positions include 10-11 and histidine 18; that span reads SF. The substrate site is built by lysine 42, leucine 74, and arginine 88. ATP is bound by residues 89–91, glutamate 99, and 124–130; these read GMR and WIFTSSS.

Belongs to the bacterial CoaD family. Homohexamer. Mg(2+) is required as a cofactor.

The protein resides in the cytoplasm. The enzyme catalyses (R)-4'-phosphopantetheine + ATP + H(+) = 3'-dephospho-CoA + diphosphate. It participates in cofactor biosynthesis; coenzyme A biosynthesis; CoA from (R)-pantothenate: step 4/5. Its function is as follows. Reversibly transfers an adenylyl group from ATP to 4'-phosphopantetheine, yielding dephospho-CoA (dPCoA) and pyrophosphate. This chain is Phosphopantetheine adenylyltransferase, found in Desulfatibacillum aliphaticivorans.